The primary structure comprises 421 residues: Synaptotagmin-12 (421 aa).

At 1 to 18 the chain is on the vesicular side; it reads MAVDVTEYHLSVIKSPPG. A helical membrane pass occupies residues 19 to 39; sequence WEVGVYAAGALALLGIAAVSL. The Cytoplasmic segment spans residues 40-421; the sequence is WKLWTSGSFP…VSMWHPVRRN (382 aa). Phosphoserine; by PKA is present on serine 97. 2 positions are modified to phosphoserine: serine 99 and serine 214. C2 domains lie at 152–272 and 283–416; these read TLGQ…SGWL and AVGE…SMWH.

This sequence belongs to the synaptotagmin family. In terms of assembly, homodimer. Can also form heterodimers. Interacts with SYT1. In terms of processing, phosphorylation of Ser-97 is required for mossy-fiber long-term potentiation. Expressed in the brain, specifically by neurons in the hippocampus, and in the adrenal medulla (at protein level).

Its subcellular location is the cytoplasmic vesicle. It localises to the secretory vesicle. The protein resides in the synaptic vesicle membrane. Synaptic vesicle phosphoprotein that enhances spontaneous neurotransmitter release but does not effect induced neurotransmitter release. Unlike other synaptotagmins, it does not bind Ca(2+) or phospholipids. Essential for mossy-fiber long-term potentiation in the hippocampus. The sequence is that of Synaptotagmin-12 from Mus musculus (Mouse).